Consider the following 364-residue polypeptide: Aminomethyltransferase (364 aa).

It belongs to the GcvT family. As to quaternary structure, the glycine cleavage system is composed of four proteins: P, T, L and H.

It catalyses the reaction N(6)-[(R)-S(8)-aminomethyldihydrolipoyl]-L-lysyl-[protein] + (6S)-5,6,7,8-tetrahydrofolate = N(6)-[(R)-dihydrolipoyl]-L-lysyl-[protein] + (6R)-5,10-methylene-5,6,7,8-tetrahydrofolate + NH4(+). Functionally, the glycine cleavage system catalyzes the degradation of glycine. In Citrobacter koseri (strain ATCC BAA-895 / CDC 4225-83 / SGSC4696), this protein is Aminomethyltransferase.